A 932-amino-acid chain; its full sequence is 2-oxoglutarate dehydrogenase E1 component (932 aa).

It belongs to the alpha-ketoglutarate dehydrogenase family. In terms of assembly, homodimer. Part of the 2-oxoglutarate dehydrogenase (OGDH) complex composed of E1 (2-oxoglutarate dehydrogenase), E2 (dihydrolipoamide succinyltransferase) and E3 (dihydrolipoamide dehydrogenase); the complex contains multiple copies of the three enzymatic components (E1, E2 and E3). It depends on thiamine diphosphate as a cofactor.

It carries out the reaction N(6)-[(R)-lipoyl]-L-lysyl-[protein] + 2-oxoglutarate + H(+) = N(6)-[(R)-S(8)-succinyldihydrolipoyl]-L-lysyl-[protein] + CO2. Its function is as follows. E1 component of the 2-oxoglutarate dehydrogenase (OGDH) complex which catalyzes the decarboxylation of 2-oxoglutarate, the first step in the conversion of 2-oxoglutarate to succinyl-CoA and CO(2). This Staphylococcus aureus (strain JH9) protein is 2-oxoglutarate dehydrogenase E1 component.